The following is a 142-amino-acid chain: Large ribosomal subunit protein uL22c (142 aa).

This sequence belongs to the universal ribosomal protein uL22 family. As to quaternary structure, part of the 50S ribosomal subunit.

Its subcellular location is the plastid. It is found in the chloroplast. This protein binds specifically to 23S rRNA. Its function is as follows. The globular domain of the protein is located near the polypeptide exit tunnel on the outside of the subunit, while an extended beta-hairpin is found that lines the wall of the exit tunnel in the center of the 70S ribosome. In Ceratophyllum demersum (Rigid hornwort), this protein is Large ribosomal subunit protein uL22c (rpl22).